The primary structure comprises 256 residues: Thiazole synthase (256 aa).

The active-site Schiff-base intermediate with DXP is lysine 95. 1-deoxy-D-xylulose 5-phosphate contacts are provided by residues glycine 156, 182 to 183 (AG), and 204 to 205 (NT).

The protein belongs to the ThiG family. Homotetramer. Forms heterodimers with either ThiH or ThiS.

The protein resides in the cytoplasm. The enzyme catalyses [ThiS sulfur-carrier protein]-C-terminal-Gly-aminoethanethioate + 2-iminoacetate + 1-deoxy-D-xylulose 5-phosphate = [ThiS sulfur-carrier protein]-C-terminal Gly-Gly + 2-[(2R,5Z)-2-carboxy-4-methylthiazol-5(2H)-ylidene]ethyl phosphate + 2 H2O + H(+). Its pathway is cofactor biosynthesis; thiamine diphosphate biosynthesis. In terms of biological role, catalyzes the rearrangement of 1-deoxy-D-xylulose 5-phosphate (DXP) to produce the thiazole phosphate moiety of thiamine. Sulfur is provided by the thiocarboxylate moiety of the carrier protein ThiS. In vitro, sulfur can be provided by H(2)S. This is Thiazole synthase from Klebsiella pneumoniae subsp. pneumoniae (strain ATCC 700721 / MGH 78578).